Here is a 505-residue protein sequence, read N- to C-terminus: Deoxyguanosinetriphosphate triphosphohydrolase (505 aa).

The 208-residue stretch at 66 to 273 folds into the HD domain; sequence RLTHSMEVQQ…MEAADDISYC (208 aa).

It belongs to the dGTPase family. Type 1 subfamily. As to quaternary structure, homotetramer. Mg(2+) serves as cofactor.

The enzyme catalyses dGTP + H2O = 2'-deoxyguanosine + triphosphate + H(+). Its function is as follows. dGTPase preferentially hydrolyzes dGTP over the other canonical NTPs. This is Deoxyguanosinetriphosphate triphosphohydrolase from Salmonella arizonae (strain ATCC BAA-731 / CDC346-86 / RSK2980).